A 764-amino-acid chain; its full sequence is Palmitoyltransferase AKR1 (764 aa).

2 disordered regions span residues 1 to 38 (MVNE…GDSN) and 51 to 71 (SGNE…AEED). Residues 1 to 321 (MVNELENVPR…IKKWFKKSQH (321 aa)) lie on the Cytoplasmic side of the membrane. The span at 10 to 27 (RASTLTNEEQTVDPSNND) shows a compositional bias: polar residues. A phosphoserine mark is found at serine 51 and serine 57. 6 ANK repeats span residues 72 to 102 (PLLT…EVNN), 108 to 137 (EHIT…DVNA), 142 to 171 (LHAT…DPTM), 175 to 204 (QGFN…SKGL), 213 to 242 (KGRT…SIKI), and 246 to 275 (EGFT…DFFQ). The chain crosses the membrane as a helical span at residues 322-341 (AKLVTFITPFLFLGIAFALF). The Lumenal segment spans residues 342 to 346 (SHINP). The helical transmembrane segment at 347–364 (LFVIIVLFLLAIATNKGL) threads the bilayer. Residues 365–384 (NKFVLPSYGRMGVHNVTLLR) are Cytoplasmic-facing. The helical transmembrane segment at 385 to 405 (SPLLSGVFFGTLLWVTIVWFF) threads the bilayer. The Lumenal segment spans residues 406–418 (KVMPRTFSDEQYT). The helical transmembrane segment at 419–439 (NILMLVILVSVFYLFGQLVIM) threads the bilayer. Topologically, residues 440-513 (DPGCLPEETD…FNDVGLKNHK (74 aa)) are cytoplasmic. Residues 470–520 (NFCIETWIRKPLRSKFSPLNNAVVARFDHYCPWIFNDVGLKNHKAFIFFIT) enclose the DHHC domain. The S-palmitoyl cysteine intermediate role is filled by cysteine 500. Residues 514–534 (AFIFFITLMESGIFTFLALCL) traverse the membrane as a helical segment. Over 535-570 (EYFDELEDAHEDTSQKNGKCFILGASDLCSGLIYDR) the chain is Lumenal. A helical transmembrane segment spans residues 571–591 (FVFLILLWALLQSIWVASLIF). The Cytoplasmic portion of the chain corresponds to 592-764 (VQAFQICKGM…KDVEQGNDMV (173 aa)).

This sequence belongs to the DHHC palmitoyltransferase family. AKR/ZDHHC17 subfamily.

It is found in the early endosome membrane. Its subcellular location is the golgi apparatus membrane. The catalysed reaction is L-cysteinyl-[protein] + hexadecanoyl-CoA = S-hexadecanoyl-L-cysteinyl-[protein] + CoA. Its function is as follows. Palmitoyltransferase specific for casein kinase 1. Palmitoylates isoforms YCK1 and YCK2 at both C-terminal cysteine residues, which is required for their proper plasma membrane localization. Required for constitutive endocytosis of a-factor receptor STE3 and both constitutive and pheromone-induced endocytosis of alpha-factor receptor STE2. The sequence is that of Palmitoyltransferase AKR1 (AKR1) from Saccharomyces cerevisiae (strain ATCC 204508 / S288c) (Baker's yeast).